Consider the following 493-residue polypeptide: Serine/threonine-protein kinase 3 (493 aa).

Positions Phe26–Ile277 constitute a Protein kinase domain. ATP-binding positions include Leu32–Val40 and Lys55. Asp145 acts as the Proton acceptor in catalysis. Thr179 is modified (phosphothreonine; by autocatalysis). Positions Leu286–Lys327 form a coiled coil. Disordered regions lie at residues Glu303–Met336 and Asp369–Gln414. The span at Leu308 to Leu320 shows a compositional bias: acidic residues. Residues Met325–Met336 show a composition bias toward polar residues. A compositionally biased stretch (acidic residues) spans Asp369–Asp378. Residues Tyr398–Asp410 are compositionally biased toward basic and acidic residues. Residues Phe439–Lys486 form the SARAH domain. Positions Asn444–Gln477 form a coiled coil.

The protein belongs to the protein kinase superfamily. STE Ser/Thr protein kinase family. STE20 subfamily. Homodimer; mediated via the coiled-coil region. Mg(2+) is required as a cofactor.

Its subcellular location is the cytoplasm. It is found in the nucleus. The enzyme catalyses L-seryl-[protein] + ATP = O-phospho-L-seryl-[protein] + ADP + H(+). The catalysed reaction is L-threonyl-[protein] + ATP = O-phospho-L-threonyl-[protein] + ADP + H(+). Inhibited by the C-terminal non-catalytic region. Activated by caspase-cleavage. Full activation also requires homodimerization and autophosphorylation of Thr-179. Stress-activated, pro-apoptotic kinase which, following caspase-cleavage, enters the nucleus and induces chromatin condensation followed by internucleosomal DNA fragmentation. Key component of the Hippo signaling pathway which plays a pivotal role in organ size control and tumor suppression by restricting proliferation and promoting apoptosis. The core of this pathway is composed of a kinase cascade wherein stk3/mst2 and stk4/mst1, in complex with its regulatory protein sav1, phosphorylates and activates lats1/2 in complex with its regulatory protein mob1, which in turn phosphorylates and inactivates yap1 oncoprotein and wwtr1/taz. Phosphorylation of yap1 by lats2 inhibits its translocation into the nucleus to regulate cellular genes important for cell proliferation, cell death, and cell migration. In Xenopus laevis (African clawed frog), this protein is Serine/threonine-protein kinase 3 (stk3).